Consider the following 88-residue polypeptide: Large ribosomal subunit protein bL31B (88 aa).

This sequence belongs to the bacterial ribosomal protein bL31 family. Type B subfamily. Part of the 50S ribosomal subunit.

This chain is Large ribosomal subunit protein bL31B, found in Corynebacterium glutamicum (strain R).